The primary structure comprises 293 residues: Protein transport protein yif1 (293 aa).

Residues 1–139 are Cytoplasmic-facing; it reads MPPKLYHPQP…PPAEDLNSPD (139 aa). Residues 140 to 160 traverse the membrane as a helical segment; the sequence is MYIPLMAFTTHILLLCALAGL. At 161–175 the chain is on the lumenal side; the sequence is QDDFQPELFGLRASK. The helical transmembrane segment at 176–196 threads the bilayer; it reads ACAVVLVEFLATRLGCYLLNI. The Cytoplasmic portion of the chain corresponds to 197 to 201; the sequence is SSQSQ. Residues 202–222 traverse the membrane as a helical segment; it reads VLDLLAFSGYKFVGLILTSLS. Over 223 to 226 the chain is Lumenal; sequence KLFE. A helical transmembrane segment spans residues 227–247; sequence MPWVTRFVFLYMYLATAFFLL. Topologically, residues 248–271 are cytoplasmic; the sequence is RSLKYAVLPESTMAINATITSHQR. A helical membrane pass occupies residues 272-292; sequence SRRIYFLFFIAASQILFMYVL. Position 293 (Ser293) is a topological domain, lumenal.

It belongs to the YIF1 family. In terms of assembly, component of the yip1-yif1 complex, composed of at least yif1, yip1 and yos1. The complex interacts with the ER to Golgi SNAREs bos1 and sec22.

Its subcellular location is the endoplasmic reticulum membrane. The protein localises to the golgi apparatus membrane. It is found in the cytoplasmic vesicle. The protein resides in the COPII-coated vesicle. Required for fusion of ER-derived vesicles with the Golgi during ER-to-Golgi protein transport. May be involved in proper membrane localization of Rab GTPases. The polypeptide is Protein transport protein yif1 (Schizosaccharomyces pombe (strain 972 / ATCC 24843) (Fission yeast)).